The primary structure comprises 79 residues: UPF0180 protein BCAH820_1484 (79 aa).

Belongs to the UPF0180 family.

The sequence is that of UPF0180 protein BCAH820_1484 from Bacillus cereus (strain AH820).